Reading from the N-terminus, the 382-residue chain is MSKSDYYDLLGLSKNATPEEIKKAYRKMALKYHPDKNPGDKAAEEKFKELSEAYDVLIDKDKRAAYDRYGHSAFSDGSGRGGFDFNSGFSTDFSDIFNDLFGGGFRGGRSSSKRQDGGTVGSDLRLDIEITLEDSFNGTKVPINYVTHVKCSSCSGSGSEGSVKSVQCNTCHGAGNIRTQQGFFTIERTCHVCNGEGEIIKNKCKKCSGSGRVRDEVNLLVTVPKGIESGDKIRLNGKGEAGYRGAQSGDLYVYPNIKKHKFFTRNGADLYCNVPIKMILATLGGHIEMPSIDGTWTKVKVPEGSQNGDKLRLKEKGMPVINSSRRGDMYIQITVETPINLTKQQKELLKKFDEEPNTVECNPQSTGFFQKVKSFWNDIRSS.

Residues 5–70 (DYYDLLGLSK…DKRAAYDRYG (66 aa)) enclose the J domain. Residues 138-216 (GTKVPINYVT…CSGSGRVRDE (79 aa)) form a CR-type zinc finger. Zn(2+) is bound by residues C151, C154, C168, C171, C190, C193, C204, and C207. CXXCXGXG motif repeat units follow at residues 151–158 (CSSCSGSG), 168–175 (CNTCHGAG), 190–197 (CHVCNGEG), and 204–211 (CKKCSGSG).

This sequence belongs to the DnaJ family. In terms of assembly, homodimer. The cofactor is Zn(2+).

The protein localises to the cytoplasm. Functionally, participates actively in the response to hyperosmotic and heat shock by preventing the aggregation of stress-denatured proteins and by disaggregating proteins, also in an autonomous, DnaK-independent fashion. Unfolded proteins bind initially to DnaJ; upon interaction with the DnaJ-bound protein, DnaK hydrolyzes its bound ATP, resulting in the formation of a stable complex. GrpE releases ADP from DnaK; ATP binding to DnaK triggers the release of the substrate protein, thus completing the reaction cycle. Several rounds of ATP-dependent interactions between DnaJ, DnaK and GrpE are required for fully efficient folding. Also involved, together with DnaK and GrpE, in the DNA replication of plasmids through activation of initiation proteins. The protein is Chaperone protein DnaJ of Ehrlichia ruminantium (strain Welgevonden).